We begin with the raw amino-acid sequence, 427 residues long: Glutamate-1-semialdehyde 2,1-aminomutase (427 aa).

Position 265 is an N6-(pyridoxal phosphate)lysine (K265).

Belongs to the class-III pyridoxal-phosphate-dependent aminotransferase family. HemL subfamily. As to quaternary structure, homodimer. It depends on pyridoxal 5'-phosphate as a cofactor.

Its subcellular location is the cytoplasm. It carries out the reaction (S)-4-amino-5-oxopentanoate = 5-aminolevulinate. It participates in porphyrin-containing compound metabolism; protoporphyrin-IX biosynthesis; 5-aminolevulinate from L-glutamyl-tRNA(Glu): step 2/2. This Burkholderia lata (strain ATCC 17760 / DSM 23089 / LMG 22485 / NCIMB 9086 / R18194 / 383) protein is Glutamate-1-semialdehyde 2,1-aminomutase.